We begin with the raw amino-acid sequence, 272 residues long: Cell division protein DivIB (272 aa).

Residues 1 to 21 are Cytoplasmic-facing; the sequence is MRLSSHGKKTVSTSNNPVFNR. A helical membrane pass occupies residues 22-42; sequence IGLFFTAAILFALFLQMLFFL. The region spanning 43-115 is the POTRA domain; that stretch reads RPWQDIKETK…GTAIIRVNEN (73 aa). The Extracellular portion of the chain corresponds to 43–272; that stretch reads RPWQDIKETK…SSSKSSNSSK (230 aa). A disordered region spans residues 253-272; it reads LSSLSSDKSKSSSKSSNSSK.

It belongs to the FtsQ/DivIB family. DivIB subfamily.

It localises to the cell membrane. Functionally, cell division protein that may be involved in stabilizing or promoting the assembly of the division complex. This Oenococcus oeni (strain ATCC BAA-331 / PSU-1) protein is Cell division protein DivIB.